Here is a 624-residue protein sequence, read N- to C-terminus: Probable potassium transport system protein Kup 2 (624 aa).

12 consecutive transmembrane segments (helical) span residues 14–34, 51–71, 97–117, 133–153, 163–183, 211–231, 245–265, 283–303, 335–355, 364–384, 393–413, and 416–436; these read LSFA…LYAF, ILSL…LVIV, GGWL…DGML, LSPN…FFLF, IGVY…ILGF, SALF…ALFA, WFAV…AFVL, FLPV…QAII, VYLP…VVIF, AYGI…GIIA, FKIL…AGNI, and LLTG…VMYT.

This sequence belongs to the HAK/KUP transporter (TC 2.A.72) family.

It is found in the cell inner membrane. The catalysed reaction is K(+)(in) + H(+)(in) = K(+)(out) + H(+)(out). In terms of biological role, transport of potassium into the cell. Likely operates as a K(+):H(+) symporter. The polypeptide is Probable potassium transport system protein Kup 2 (Legionella pneumophila (strain Lens)).